The chain runs to 336 residues: MIVLGLETSCDETGLALYDSELGLRGQVLYSQIKLHAEYGGVVPELASRDHVRKLIPLMNQLLEQSGVKKQEIDAVAYTRGPGLMGALMTGALFGRTLAFSLNKPAIGVHHMEGHMLAPLLSSQPPEFPFVALLVSGGHTQLMAAHGIGQYELLGESIDDAAGEAFDKVAKMMNLPYPGGPNIAKLALSGDPLAFEFPRPMLHQGLDFSFSGLKTAVSVQLKKLNGENRDADIAASFQEAIVDTLVKKSVKALKQTGLKRLVIAGGVSANLRLREQLETSLAKIKAQVYYAEPALCTDNGAMIAFAGYQRLKAGQHDGLAVTTTPRWPMTELTIPE.

Fe cation-binding residues include His-111 and His-115. Substrate-binding positions include 134–138 (LVSGG), Asp-167, Gly-180, and Asn-270. Asp-298 contributes to the Fe cation binding site.

This sequence belongs to the KAE1 / TsaD family. Requires Fe(2+) as cofactor.

The protein resides in the cytoplasm. The enzyme catalyses L-threonylcarbamoyladenylate + adenosine(37) in tRNA = N(6)-L-threonylcarbamoyladenosine(37) in tRNA + AMP + H(+). In terms of biological role, required for the formation of a threonylcarbamoyl group on adenosine at position 37 (t(6)A37) in tRNAs that read codons beginning with adenine. Is involved in the transfer of the threonylcarbamoyl moiety of threonylcarbamoyl-AMP (TC-AMP) to the N6 group of A37, together with TsaE and TsaB. TsaD likely plays a direct catalytic role in this reaction. This Acinetobacter baumannii (strain AB307-0294) protein is tRNA N6-adenosine threonylcarbamoyltransferase.